The following is a 629-amino-acid chain: Phosphomethylpyrimidine synthase (629 aa).

A disordered region spans residues Met-1–Gly-20. Residues Asn-233, Met-262, Tyr-291, His-327, Ser-347–Gly-349, Asp-388–Arg-391, and Glu-427 each bind substrate. His-431 is a Zn(2+) binding site. Tyr-454 is a binding site for substrate. His-495 is a binding site for Zn(2+). Residues Cys-575, Cys-578, and Cys-583 each coordinate [4Fe-4S] cluster.

This sequence belongs to the ThiC family. As to quaternary structure, homodimer. [4Fe-4S] cluster serves as cofactor.

The catalysed reaction is 5-amino-1-(5-phospho-beta-D-ribosyl)imidazole + S-adenosyl-L-methionine = 4-amino-2-methyl-5-(phosphooxymethyl)pyrimidine + CO + 5'-deoxyadenosine + formate + L-methionine + 3 H(+). It functions in the pathway cofactor biosynthesis; thiamine diphosphate biosynthesis. Functionally, catalyzes the synthesis of the hydroxymethylpyrimidine phosphate (HMP-P) moiety of thiamine from aminoimidazole ribotide (AIR) in a radical S-adenosyl-L-methionine (SAM)-dependent reaction. This is Phosphomethylpyrimidine synthase from Pseudomonas savastanoi pv. phaseolicola (strain 1448A / Race 6) (Pseudomonas syringae pv. phaseolicola (strain 1448A / Race 6)).